Reading from the N-terminus, the 336-residue chain is MLYPLARHFLFKFNPEQAHDLSIKYLPRLLGTPLDCFFRHSLPKRPVTVMGLYFANPVGLAAGLDKDGECIDAFGAMGFGFIEVGTVTPKPQSGNDKPRLFRVIPAEGIINRMGFNNKGVDHLVAQVKKAKYQGVIGINIGKNKDTPIEQGKDDYLICMDKVYDHAGYIAVNISSPNTPGLRSLQYGDALDELLAALKVRQQELAAQYKKYVPLAVKIAPDLSLDEINQVAASLIKNGIDGVIATNTTLDREMIYDMPHAGEAGGLSGRPLQHKSTEVIRQLAKALDGALPIIGVGGIDSAMAAREKLAAGASLVQIYSGFIYKGPSLVKEIVTHI.

FMN-binding positions include 62–66 and threonine 86; that span reads AGLDK. Lysine 66 lines the substrate pocket. 111-115 provides a ligand contact to substrate; that stretch reads NRMGF. Positions 139 and 172 each coordinate FMN. A substrate-binding site is contributed by asparagine 172. Residue serine 175 is the Nucleophile of the active site. Asparagine 177 is a binding site for substrate. FMN is bound by residues lysine 217 and threonine 245. Position 246 to 247 (246 to 247) interacts with substrate; that stretch reads NT. FMN contacts are provided by residues glycine 268, glycine 297, and 318–319; that span reads YS.

It belongs to the dihydroorotate dehydrogenase family. Type 2 subfamily. In terms of assembly, monomer. The cofactor is FMN.

Its subcellular location is the cell membrane. The enzyme catalyses (S)-dihydroorotate + a quinone = orotate + a quinol. The protein operates within pyrimidine metabolism; UMP biosynthesis via de novo pathway; orotate from (S)-dihydroorotate (quinone route): step 1/1. Its function is as follows. Catalyzes the conversion of dihydroorotate to orotate with quinone as electron acceptor. This is Dihydroorotate dehydrogenase (quinone) from Aeromonas salmonicida (strain A449).